Reading from the N-terminus, the 286-residue chain is MSIISTKYLLQDAQANGYAVPAFNIHNAETIQAILEVCSEMRSPVILAGTPGTFKHIALEEIYALCSAYSTTYNMPLALHLDHHESLDDIRRKVHAGVRSAMIDGSHFPFAENVKLVKSVVDFCHSQDCSVEAELGRLGGVEDDMSVDAESAFLTDPQEAKRFVELTGVDSLAVAIGTAHGLYSKTPKIDFQRLAEIREVVDVPLVLHGASDVPDEFVRRTIELGVTKVNVATELKIAFAGAVKAWFAENPQGNDPRNYMRVGMDAMKEVVRNKINVCGSANRISA.

The Proton donor role is filled by Asp-82. Residues His-83 and His-180 each coordinate Zn(2+). Gly-181 contributes to the dihydroxyacetone phosphate binding site. A Zn(2+)-binding site is contributed by His-208. Residues 209–211 (GAS) and 230–233 (NVAT) each bind dihydroxyacetone phosphate.

This sequence belongs to the class II fructose-bisphosphate aldolase family. TagBP aldolase KbaY subfamily. In terms of assembly, homotetramer. Forms a complex with KbaZ. The cofactor is Zn(2+).

It carries out the reaction D-tagatofuranose 1,6-bisphosphate = D-glyceraldehyde 3-phosphate + dihydroxyacetone phosphate. Its pathway is carbohydrate metabolism; D-tagatose 6-phosphate degradation; D-glyceraldehyde 3-phosphate and glycerone phosphate from D-tagatose 6-phosphate: step 2/2. Functionally, catalytic subunit of the tagatose-1,6-bisphosphate aldolase KbaYZ, which catalyzes the reversible aldol condensation of dihydroxyacetone phosphate (DHAP or glycerone-phosphate) with glyceraldehyde 3-phosphate (G3P) to produce tagatose 1,6-bisphosphate (TBP). Requires KbaZ subunit for full activity and stability. Is involved in the catabolism of N-acetylgalactosamine and D-galactosamine. In Escherichia coli, this protein is D-tagatose-1,6-bisphosphate aldolase subunit KbaY (kbaY).